The chain runs to 226 residues: UPF0177 protein YbdJ (226 aa).

Transmembrane regions (helical) follow at residues 16–36, 43–63, 81–101, 169–189, and 206–226; these read LLLL…LGIF, FAFN…IVIA, LLFI…AHHL, FAWV…ISLV, and LHSS…FWVF.

It belongs to the UPF0177 family.

The protein resides in the cell membrane. This Lactococcus lactis subsp. lactis (strain IL1403) (Streptococcus lactis) protein is UPF0177 protein YbdJ (ybdJ).